A 344-amino-acid polypeptide reads, in one-letter code: Phenylalanine--tRNA ligase alpha subunit (344 aa).

Position 256 (Glu256) interacts with Mg(2+).

This sequence belongs to the class-II aminoacyl-tRNA synthetase family. Phe-tRNA synthetase alpha subunit type 1 subfamily. As to quaternary structure, tetramer of two alpha and two beta subunits. Mg(2+) is required as a cofactor.

Its subcellular location is the cytoplasm. It catalyses the reaction tRNA(Phe) + L-phenylalanine + ATP = L-phenylalanyl-tRNA(Phe) + AMP + diphosphate + H(+). The sequence is that of Phenylalanine--tRNA ligase alpha subunit from Anoxybacillus flavithermus (strain DSM 21510 / WK1).